Consider the following 214-residue polypeptide: Adenylate kinase (214 aa).

10 to 15 (GAGKGT) is a binding site for ATP. The tract at residues 30-59 (STGDMLRAAVKAQTPVGLKAKAVMDRGELV) is NMP. AMP-binding positions include threonine 31, arginine 36, 57–59 (ELV), 85–88 (GYPR), and glutamine 92. An LID region spans residues 126 to 163 (GRFTCAKCGTGYHDRHKQPAREGVCDVCGSTEFKRRPD). An ATP-binding site is contributed by arginine 127. Residues cysteine 130, cysteine 133, cysteine 150, and cysteine 153 each contribute to the Zn(2+) site. Arginine 160 and arginine 172 together coordinate AMP. Glycine 200 is a binding site for ATP.

The protein belongs to the adenylate kinase family. Monomer.

Its subcellular location is the cytoplasm. The enzyme catalyses AMP + ATP = 2 ADP. The protein operates within purine metabolism; AMP biosynthesis via salvage pathway; AMP from ADP: step 1/1. In terms of biological role, catalyzes the reversible transfer of the terminal phosphate group between ATP and AMP. Plays an important role in cellular energy homeostasis and in adenine nucleotide metabolism. The sequence is that of Adenylate kinase from Erythrobacter litoralis (strain HTCC2594).